The following is a 767-amino-acid chain: uncharacterized protein (767 aa).

3 disordered regions span residues 171–209 (LPVW…LRTP), 314–340 (ETEA…CQEE), and 533–566 (RDHG…PRGF). Basic and acidic residues-rich tracts occupy residues 322–331 (PDPRPEKDAK) and 552–564 (ETKD…RDPR).

This is an uncharacterized protein from Homo sapiens (Human).